The following is a 118-amino-acid chain: MIPQIQRNVIRQRVHTRIRERIQGTTERPRLNVYRSLNHIYAQIIDDTQGRTLVSASTIADKIKTGGNVAAAKEIGKLVAQRAVDKGIKKVVYDRGGYLYHGRIKALADAAREAGLEF.

The protein belongs to the universal ribosomal protein uL18 family. In terms of assembly, part of the 50S ribosomal subunit; part of the 5S rRNA/L5/L18/L25 subcomplex. Contacts the 5S and 23S rRNAs.

This is one of the proteins that bind and probably mediate the attachment of the 5S RNA into the large ribosomal subunit, where it forms part of the central protuberance. The protein is Large ribosomal subunit protein uL18 of Acidobacterium capsulatum (strain ATCC 51196 / DSM 11244 / BCRC 80197 / JCM 7670 / NBRC 15755 / NCIMB 13165 / 161).